Here is a 256-residue protein sequence, read N- to C-terminus: Probable histidine-binding protein (256 aa).

The signal sequence occupies residues 1–19; the sequence is MKKFLTAFLVAFTGLFLVA. The N-palmitoyl cysteine moiety is linked to residue Cys-20. Cys-20 carries S-diacylglycerol cysteine lipidation.

The protein belongs to the bacterial solute-binding protein 3 family.

It localises to the cell membrane. Involved in histidine transport. This Campylobacter jejuni subsp. jejuni serotype O:2 (strain ATCC 700819 / NCTC 11168) protein is Probable histidine-binding protein (hisJ).